The chain runs to 408 residues: Histidine--tRNA ligase (408 aa).

This sequence belongs to the class-II aminoacyl-tRNA synthetase family. In terms of assembly, homodimer.

It is found in the cytoplasm. It catalyses the reaction tRNA(His) + L-histidine + ATP = L-histidyl-tRNA(His) + AMP + diphosphate + H(+). The protein is Histidine--tRNA ligase of Campylobacter jejuni subsp. jejuni serotype O:2 (strain ATCC 700819 / NCTC 11168).